The chain runs to 442 residues: tRNA-2-methylthio-N(6)-dimethylallyladenosine synthase (442 aa).

The MTTase N-terminal domain maps to 3–118 (KKVFIKTFGC…LPELLNARAA (116 aa)). Residues C12, C49, C81, C155, C159, and C162 each contribute to the [4Fe-4S] cluster site. Residues 141 to 374 (RVEGSSAFVS…QAVINNNIKD (234 aa)) form the Radical SAM core domain. In terms of domain architecture, TRAM spans 377–440 (DERVGTVQRL…TFTLRGEVVV (64 aa)).

Belongs to the methylthiotransferase family. MiaB subfamily. As to quaternary structure, monomer. Requires [4Fe-4S] cluster as cofactor.

The protein localises to the cytoplasm. It carries out the reaction N(6)-dimethylallyladenosine(37) in tRNA + (sulfur carrier)-SH + AH2 + 2 S-adenosyl-L-methionine = 2-methylsulfanyl-N(6)-dimethylallyladenosine(37) in tRNA + (sulfur carrier)-H + 5'-deoxyadenosine + L-methionine + A + S-adenosyl-L-homocysteine + 2 H(+). Its function is as follows. Catalyzes the methylthiolation of N6-(dimethylallyl)adenosine (i(6)A), leading to the formation of 2-methylthio-N6-(dimethylallyl)adenosine (ms(2)i(6)A) at position 37 in tRNAs that read codons beginning with uridine. The sequence is that of tRNA-2-methylthio-N(6)-dimethylallyladenosine synthase from Delftia acidovorans (strain DSM 14801 / SPH-1).